Reading from the N-terminus, the 863-residue chain is Paramyosin (863 aa).

The interval 1–18 (MSESHVKISRTIIRGTSP) is nonhelical region. Residues 19-836 (STVRLESRVR…ERTITIKRTI (818 aa)) adopt a coiled-coil conformation. The interval 837–863 (GGPGSRAVSVVREINSVSRGNRATSIM) is nonhelical region.

Belongs to the paramyosin family. Homodimer.

It localises to the cytoplasm. The protein localises to the myofibril. Paramyosin is a major structural component of many thick filaments isolated from invertebrate muscles. This Taenia saginata (Beef tapeworm) protein is Paramyosin (PMY).